The primary structure comprises 283 residues: Peroxisomal membrane protein PEX18 (283 aa).

The tract at residues 179 to 201 (SSLEEDVHTEEENSGTSLEDEET) is disordered. Residues 180–200 (SLEEDVHTEEENSGTSLEDEE) show a composition bias toward acidic residues.

As to quaternary structure, interacts with PEX7; The interaction with PEX7 stabilizes PEX18. Interacts with PEX13. Post-translationally, ubiquitinated in a UBC4/UBC5 dependent manner.

It is found in the cytoplasm. Its subcellular location is the peroxisome membrane. Functionally, involved in peroxisome biogenesis and the import of peroxisomal matrix proteins that contain the peroxisomal targeting sequence PTS2. Required for peroxisomal targeting of PEX7 and growth on oleate. In Saccharomyces cerevisiae (strain ATCC 204508 / S288c) (Baker's yeast), this protein is Peroxisomal membrane protein PEX18 (PEX18).